Here is a 501-residue protein sequence, read N- to C-terminus: MKFKADEISSIIKERIENFDLNLEIEETGKIISVADGVAKVYGLKNIMAGEMVEFENGDKGMALNLEESSVGIVILGKGEGLKEGASVKRLKKLLKVPVGEALIGRVVNALGEPIDAKGVINANEYRFVEEKAKGIMARKSVHEPLHTGIKAIDALVPIGRGQRELIIGDRQTGKTTVAVDTIISQRGQGVICIYVAIGQKQSTVAQVVKRLEEHGAMEYTIVVNAGASDPAALQYLAPYTGVTMGEFFRDNAKHALIVYDDLSKHAVAYREMSLILRRPPGREAYPGDVFYLHSRLLERASKLNDELGAGSLTALPIIETQAGDVSAYIPTNVISITDGQIFLETDLFNSGIRPAINVGLSVSRVGGAAQIKATKQVSGTLRLDLAQYRELQAFAQFASDLDEASRKQLERGQRMVELLKQPPYSPLSVEKQVVLIFAGTKGFLDDIAVSRIKEFEDGIYPFIEAKHPDIFEQIRSKKALDSDLEEKLAKAINEFKANHL.

169–176 (GDRQTGKT) provides a ligand contact to ATP.

It belongs to the ATPase alpha/beta chains family. In terms of assembly, F-type ATPases have 2 components, CF(1) - the catalytic core - and CF(0) - the membrane proton channel. CF(1) has five subunits: alpha(3), beta(3), gamma(1), delta(1), epsilon(1). CF(0) has three main subunits: a(1), b(2) and c(9-12). The alpha and beta chains form an alternating ring which encloses part of the gamma chain. CF(1) is attached to CF(0) by a central stalk formed by the gamma and epsilon chains, while a peripheral stalk is formed by the delta and b chains.

It is found in the cell inner membrane. The catalysed reaction is ATP + H2O + 4 H(+)(in) = ADP + phosphate + 5 H(+)(out). Its function is as follows. Produces ATP from ADP in the presence of a proton gradient across the membrane. The alpha chain is a regulatory subunit. The protein is ATP synthase subunit alpha of Campylobacter jejuni subsp. jejuni serotype O:6 (strain 81116 / NCTC 11828).